Here is a 564-residue protein sequence, read N- to C-terminus: Phosphomethylpyrimidine synthase (564 aa).

Substrate contacts are provided by residues Asn-203, Met-232, Tyr-261, His-297, 317–319 (SRG), 358–361 (DGLR), and Glu-397. His-401 lines the Zn(2+) pocket. Tyr-424 contacts substrate. Zn(2+) is bound at residue His-465. Positions 541, 544, and 549 each coordinate [4Fe-4S] cluster.

Belongs to the ThiC family. The cofactor is [4Fe-4S] cluster.

It catalyses the reaction 5-amino-1-(5-phospho-beta-D-ribosyl)imidazole + S-adenosyl-L-methionine = 4-amino-2-methyl-5-(phosphooxymethyl)pyrimidine + CO + 5'-deoxyadenosine + formate + L-methionine + 3 H(+). It functions in the pathway cofactor biosynthesis; thiamine diphosphate biosynthesis. Catalyzes the synthesis of the hydroxymethylpyrimidine phosphate (HMP-P) moiety of thiamine from aminoimidazole ribotide (AIR) in a radical S-adenosyl-L-methionine (SAM)-dependent reaction. The sequence is that of Phosphomethylpyrimidine synthase from Bacteroides fragilis (strain ATCC 25285 / DSM 2151 / CCUG 4856 / JCM 11019 / LMG 10263 / NCTC 9343 / Onslow / VPI 2553 / EN-2).